The sequence spans 248 residues: Cell division protein FtsQ (248 aa).

Over M1–R4 the chain is Cytoplasmic. A helical transmembrane segment spans residues L5–L25. Over R26 to R248 the chain is Periplasmic. One can recognise a POTRA domain in the interval L32–Y101.

Belongs to the FtsQ/DivIB family. FtsQ subfamily. In terms of assembly, part of a complex composed of FtsB, FtsL and FtsQ.

The protein localises to the cell inner membrane. Its function is as follows. Essential cell division protein. May link together the upstream cell division proteins, which are predominantly cytoplasmic, with the downstream cell division proteins, which are predominantly periplasmic. May control correct divisome assembly. This is Cell division protein FtsQ from Allochromatium vinosum (strain ATCC 17899 / DSM 180 / NBRC 103801 / NCIMB 10441 / D) (Chromatium vinosum).